A 129-amino-acid chain; its full sequence is uncharacterized protein (129 aa).

The protein localises to the cytoplasm. It localises to the cytosol. It is found in the nucleus. This is an uncharacterized protein from Schizosaccharomyces pombe (strain 972 / ATCC 24843) (Fission yeast).